We begin with the raw amino-acid sequence, 150 residues long: UPF0756 membrane protein STH2648 (150 aa).

Transmembrane regions (helical) follow at residues Ala13–Leu33, Ala52–Trp72, Leu85–Leu105, and Val111–Val131.

The protein belongs to the UPF0756 family.

It localises to the cell membrane. This chain is UPF0756 membrane protein STH2648, found in Symbiobacterium thermophilum (strain DSM 24528 / JCM 14929 / IAM 14863 / T).